A 183-amino-acid chain; its full sequence is Capsid protein (183 aa).

The tract at residues 143–183 (LPETAVVRRRGRSPRRRTPSPRRRRSQSPRRRRSQSPASQC) is disordered. Basic residues predominate over residues 149-176 (VRRRGRSPRRRTPSPRRRRSQSPRRRRS). Phosphoserine; by host occurs at positions 155, 162, and 170. The stretch at 155–161 (SPRRRTP) is one 1; half-length repeat. Residues 155 to 177 (SPRRRTPSPRRRRSQSPRRRRSQ) are 3 X 8 AA repeats of S-P-R-R-R-[PR]-S-Q. The Bipartite nuclear localization signal signature appears at 158–175 (RRTPSPRRRRSQSPRRRR). 2 tandem repeats follow at residues 162–169 (SPRRRRSQ) and 170–177 (SPRRRRSQ). The RNA binding stretch occupies residues 177-183 (QSPASQC).

This sequence belongs to the orthohepadnavirus core antigen family. In terms of assembly, homodimerizes, then multimerizes. Interacts with cytosol exposed regions of viral L glycoprotein present in the reticulum-to-Golgi compartment. Interacts with human FLNB. Phosphorylated form interacts with host importin alpha; this interaction depends on the exposure of the NLS, which itself depends upon genome maturation and/or phosphorylation of the capsid protein. Interacts with host NUP153. Post-translationally, phosphorylated by host SRPK1, SRPK2, and maybe protein kinase C or GAPDH. Phosphorylation is critical for pregenomic RNA packaging. Protein kinase C phosphorylation is stimulated by HBx protein and may play a role in transport of the viral genome to the nucleus at the late step during the viral replication cycle.

The protein localises to the virion. Its subcellular location is the host cytoplasm. Functionally, self assembles to form an icosahedral capsid. Most capsids appear to be large particles with an icosahedral symmetry of T=4 and consist of 240 copies of capsid protein, though a fraction forms smaller T=3 particles consisting of 180 capsid proteins. Entering capsids are transported along microtubules to the nucleus. Phosphorylation of the capsid is thought to induce exposure of nuclear localization signal in the C-terminal portion of the capsid protein that allows binding to the nuclear pore complex via the importin (karyopherin-) alpha and beta. Capsids are imported in intact form through the nuclear pore into the nuclear basket, where it probably binds NUP153. Only capsids that contain the mature viral genome can release the viral DNA and capsid protein into the nucleoplasm. Immature capsids get stuck in the basket. Capsids encapsulate the pre-genomic RNA and the P protein. Pre-genomic RNA is reverse-transcribed into DNA while the capsid is still in the cytoplasm. The capsid can then either be directed to the nucleus, providing more genomes for transcription, or bud through the endoplasmic reticulum to provide new virions. The sequence is that of Capsid protein from Gorilla gorilla (western gorilla).